The primary structure comprises 240 residues: Competence protein ComFC (240 aa).

This sequence belongs to the ComF/GntX family. In terms of assembly, monomer and dimer in solution. Interacts with ComFA and DprA; ComFA-ComFC form rings about 150 Angstroms in diameter with apparent 6-fold symmetry.

In terms of biological role, involved in transformation (genetic competence for DNA uptake). The chain is Competence protein ComFC (comFC) from Bacillus subtilis (strain 168).